The following is a 620-amino-acid chain: 1-deoxy-D-xylulose-5-phosphate synthase (620 aa).

Residues H80 and 121–123 (GHS) each bind thiamine diphosphate. D152 serves as a coordination point for Mg(2+). Thiamine diphosphate is bound by residues 153 to 154 (GA), N181, Y288, and E370. Position 181 (N181) interacts with Mg(2+).

This sequence belongs to the transketolase family. DXPS subfamily. Homodimer. Mg(2+) is required as a cofactor. The cofactor is thiamine diphosphate.

It carries out the reaction D-glyceraldehyde 3-phosphate + pyruvate + H(+) = 1-deoxy-D-xylulose 5-phosphate + CO2. Its pathway is metabolic intermediate biosynthesis; 1-deoxy-D-xylulose 5-phosphate biosynthesis; 1-deoxy-D-xylulose 5-phosphate from D-glyceraldehyde 3-phosphate and pyruvate: step 1/1. In terms of biological role, catalyzes the acyloin condensation reaction between C atoms 2 and 3 of pyruvate and glyceraldehyde 3-phosphate to yield 1-deoxy-D-xylulose-5-phosphate (DXP). The chain is 1-deoxy-D-xylulose-5-phosphate synthase from Salmonella choleraesuis (strain SC-B67).